A 176-amino-acid chain; its full sequence is Protein MAL2 (176 aa).

Over 1-34 the chain is Cytoplasmic; sequence MSAGGASVPPPPNPAVSFPPPRVTLPAGPDILRT. The region spanning 31 to 175 is the MARVEL domain; the sequence is ILRTYSGAFV…SLGLALRRWR (145 aa). The helical transmembrane segment at 35-55 threads the bilayer; that stretch reads YSGAFVCLEILFGGLVWILVA. Residues 56–66 lie on the Lumenal side of the membrane; it reads SSNVPLPLLQG. The chain crosses the membrane as a helical span at residues 67 to 87; it reads WVMFVSVTAFFFSLLFLGMFL. Over 88 to 102 the chain is Cytoplasmic; it reads SGMVAQIDANWNFLD. Residues 103 to 123 form a helical membrane-spanning segment; that stretch reads FAYHFTVFVFYFGAFLLEAAA. Over 124–149 the chain is Lumenal; that stretch reads TSLHDLHCNTTITGQPLLSDNQYNIN. The N-linked (GlcNAc...) asparagine glycan is linked to Asn132. The chain crosses the membrane as a helical span at residues 150–170; the sequence is VAASIFAFMTTACYGCSLGLA. The Cytoplasmic portion of the chain corresponds to 171–176; sequence LRRWRP.

It belongs to the MAL family. Interacts with TPD52L2. As to expression, predominantly expressed in kidney, lung, and liver. Also found in thyroid gland, stomach and, at lower levels in testis and small intestine.

Its subcellular location is the cell membrane. It is found in the apical cell membrane. It localises to the endomembrane system. The protein localises to the cytoplasm. The protein resides in the perinuclear region. In terms of biological role, member of the machinery of polarized transport. Required for the indirect transcytotic route at the step of the egress of the transcytosing cargo from perinuclear endosomes in order for it to travel to the apical surface via a raft-dependent pathway. In Homo sapiens (Human), this protein is Protein MAL2 (MAL2).